Reading from the N-terminus, the 202-residue chain is Complement component C8 gamma chain (202 aa).

The first 23 residues, 1–23, serve as a signal peptide directing secretion; it reads MVLRGRAVLLAVLLAAGSLGRWA. Cys96 and Cys188 form a disulfide bridge. Asn173 carries N-linked (GlcNAc...) asparagine glycosylation.

The protein belongs to the calycin superfamily. Lipocalin family. As to quaternary structure, heterotrimer of 3 chains: alpha (C8A), beta (C8B) and gamma (C8G); the alpha and gamma chains are disulfide bonded. Component of the membrane attack complex (MAC), composed of complement C5b, C6, C7, C8A, C8B, C8G and multiple copies of the pore-forming subunit C9.

Its subcellular location is the secreted. The protein localises to the target cell membrane. With respect to regulation, membrane attack complex (MAC) assembly is inhibited by CD59, thereby protecting self-cells from damage during complement activation. MAC assembly is also inhibited by clusterin (CLU) chaperones that inhibit polymerization of C9. In terms of biological role, component of the membrane attack complex (MAC), a multiprotein complex activated by the complement cascade, which inserts into a target cell membrane and forms a pore, leading to target cell membrane rupture and cell lysis. The MAC is initiated by proteolytic cleavage of C5 into complement C5b in response to the classical, alternative, lectin and GZMK complement pathways. The complement pathways consist in a cascade of proteins that leads to phagocytosis and breakdown of pathogens and signaling that strengthens the adaptive immune system. C8G, together with C8A and C8B, inserts into the target membrane, but does not form pores by itself. During MAC assembly, associates with C5b, C6 and C7 to form the C5b8 intermediate complex that inserts into the target membrane and traverses the bilayer increasing membrane rigidity. The chain is Complement component C8 gamma chain (C8G) from Oryctolagus cuniculus (Rabbit).